The primary structure comprises 558 residues: Membrane protein insertase YidC (558 aa).

Transmembrane regions (helical) follow at residues 3-23 (IKRT…FDNW), 364-384 (FVGN…AVFF), 438-458 (LPVV…LASV), 477-497 (PYFI…KLNP), and 508-528 (MMFM…GLVL).

Belongs to the OXA1/ALB3/YidC family. Type 1 subfamily. As to quaternary structure, interacts with the Sec translocase complex via SecD. Specifically interacts with transmembrane segments of nascent integral membrane proteins during membrane integration.

It is found in the cell inner membrane. Functionally, required for the insertion and/or proper folding and/or complex formation of integral membrane proteins into the membrane. Involved in integration of membrane proteins that insert both dependently and independently of the Sec translocase complex, as well as at least some lipoproteins. Aids folding of multispanning membrane proteins. This is Membrane protein insertase YidC from Burkholderia mallei (strain NCTC 10247).